The chain runs to 482 residues: Long chain base biosynthesis protein 1c (482 aa).

The helical transmembrane segment at 33-53 (FGIHIDGHLVVEGLLIAAILF) threads the bilayer.

The protein belongs to the class-II pyridoxal-phosphate-dependent aminotransferase family. As to quaternary structure, heterodimer with LCB2. Component of the serine palmitoyltransferase (SPT) complex, composed of LCB1 and LCB2. Requires pyridoxal 5'-phosphate as cofactor.

The protein resides in the endoplasmic reticulum membrane. The catalysed reaction is L-serine + hexadecanoyl-CoA + H(+) = 3-oxosphinganine + CO2 + CoA. Its pathway is lipid metabolism; sphingolipid metabolism. Its function is as follows. Serine palmitoyltransferase (SPT). The heterodimer formed with LCB2 constitutes the catalytic core. This is Long chain base biosynthesis protein 1c from Oryza sativa subsp. japonica (Rice).